A 414-amino-acid chain; its full sequence is Eukaryotic initiation factor 4A (414 aa).

The Q motif motif lies at 41–69; sequence ESFDDMGLQENLLRGIYAYGFEKPSAIQQ. Residues 72 to 242 form the Helicase ATP-binding domain; that stretch reads IVPFCKGLDV…RKFMNKPVRI (171 aa). Residue 85–92 participates in ATP binding; it reads AQSGTGKT. A DEAD box motif is present at residues 190 to 193; it reads DEAD. The 162-residue stretch at 253–414 folds into the Helicase C-terminal domain; it reads GIKQFYVNVE…ELPANVADLL (162 aa).

This sequence belongs to the DEAD box helicase family. eIF4A subfamily. EIF4F is a multi-subunit complex, the composition of which varies with external and internal environmental conditions. It is composed of at least EIF4A, EIF4E and EIF4G.

The catalysed reaction is ATP + H2O = ADP + phosphate + H(+). In terms of biological role, ATP-dependent RNA helicase which is a subunit of the eIF4F complex involved in cap recognition and is required for mRNA binding to ribosome. In the current model of translation initiation, eIF4A unwinds RNA secondary structures in the 5'-UTR of mRNAs which is necessary to allow efficient binding of the small ribosomal subunit, and subsequent scanning for the initiator codon. The protein is Eukaryotic initiation factor 4A of Triticum aestivum (Wheat).